The following is a 111-amino-acid chain: Inner membrane protein YdgC (111 aa).

Over 1–26 (MGLVIKAALGALVVLLIGVLAKTKNY) the chain is Cytoplasmic. A helical transmembrane segment spans residues 27 to 47 (YIAGLIPLFPTFALIAHYIVA). Topologically, residues 48-58 (SERGIEALRAT) are periplasmic. The chain crosses the membrane as a helical span at residues 59-79 (IIFSMWSIIPYFVYLVSLWYF). Topologically, residues 80-87 (TGMMRLPA) are cytoplasmic. The chain crosses the membrane as a helical span at residues 88–108 (AFVGSVACWGISAWVLIICWI). Over 109–111 (KLH) the chain is Periplasmic.

The protein to P.aeruginosa GlpM.

Its subcellular location is the cell inner membrane. The polypeptide is Inner membrane protein YdgC (ydgC) (Escherichia coli O157:H7).